The sequence spans 159 residues: Probable histone H2A.5 (159 aa).

Residues 1–10 show a composition bias toward gly residues; sequence MDAAGAGAGG. Disordered stretches follow at residues 1–29 and 136–159; these read MDAA…KKAV and EKAA…PKKA. 2 stretches are compositionally biased toward basic residues: residues 11–29 and 148–159; these read KLKK…KKAV and PKKAAGKSPKKA. 2 consecutive short sequence motifs (SPKK motif) follow at residues 147-150 and 155-158; these read SPKK.

It belongs to the histone H2A family. The nucleosome is a histone octamer containing two molecules each of H2A, H2B, H3 and H4 assembled in one H3-H4 heterotetramer and two H2A-H2B heterodimers. The octamer wraps approximately 147 bp of DNA.

The protein localises to the nucleus. It localises to the chromosome. Its function is as follows. Core component of nucleosome. Nucleosomes wrap and compact DNA into chromatin, limiting DNA accessibility to the cellular machineries which require DNA as a template. Histones thereby play a central role in transcription regulation, DNA repair, DNA replication and chromosomal stability. DNA accessibility is regulated via a complex set of post-translational modifications of histones, also called histone code, and nucleosome remodeling. The chain is Probable histone H2A.5 from Oryza sativa subsp. indica (Rice).